Consider the following 344-residue polypeptide: tRNA N6-adenosine threonylcarbamoyltransferase (344 aa).

Fe cation is bound by residues H114 and H118. Residues 136–140, D170, G183, D187, and N278 contribute to the substrate site; that span reads LVSGG. D306 contributes to the Fe cation binding site.

The protein belongs to the KAE1 / TsaD family. It depends on Fe(2+) as a cofactor.

The protein resides in the cytoplasm. It carries out the reaction L-threonylcarbamoyladenylate + adenosine(37) in tRNA = N(6)-L-threonylcarbamoyladenosine(37) in tRNA + AMP + H(+). Required for the formation of a threonylcarbamoyl group on adenosine at position 37 (t(6)A37) in tRNAs that read codons beginning with adenine. Is involved in the transfer of the threonylcarbamoyl moiety of threonylcarbamoyl-AMP (TC-AMP) to the N6 group of A37, together with TsaE and TsaB. TsaD likely plays a direct catalytic role in this reaction. This is tRNA N6-adenosine threonylcarbamoyltransferase from Mycobacteroides abscessus (strain ATCC 19977 / DSM 44196 / CCUG 20993 / CIP 104536 / JCM 13569 / NCTC 13031 / TMC 1543 / L948) (Mycobacterium abscessus).